A 210-amino-acid polypeptide reads, in one-letter code: Large ribosomal subunit protein uL3 (210 aa).

This sequence belongs to the universal ribosomal protein uL3 family. Part of the 50S ribosomal subunit. Forms a cluster with proteins L14 and L19.

Its function is as follows. One of the primary rRNA binding proteins, it binds directly near the 3'-end of the 23S rRNA, where it nucleates assembly of the 50S subunit. The sequence is that of Large ribosomal subunit protein uL3 from Natranaerobius thermophilus (strain ATCC BAA-1301 / DSM 18059 / JW/NM-WN-LF).